Reading from the N-terminus, the 316-residue chain is Probable peptidyl-tRNA hydrolase 2 (316 aa).

Residues 1 to 127 (MSENIPDIDP…SHPVDPQEPN (127 aa)) are disordered. The span at 44–53 (PTPSSVTVDN) shows a compositional bias: polar residues. A compositionally biased stretch (low complexity) spans 75 to 89 (IPEVPIPSSAISISS). A UBA domain is found at 128 to 169 (EVNNEYLAHLLDLGFDEYTAVLALKRTNSAGVEQAVAWIVER). A disordered region spans residues 170-193 (SNESDFDEDSSSSENEADEEMGAV). A compositionally biased stretch (acidic residues) spans 173 to 190 (SDFDEDSSSSENEADEEM).

Belongs to the PTH2 family.

It catalyses the reaction an N-acyl-L-alpha-aminoacyl-tRNA + H2O = an N-acyl-L-amino acid + a tRNA + H(+). Its function is as follows. The natural substrate for this enzyme may be peptidyl-tRNAs which drop off the ribosome during protein synthesis. In Caenorhabditis elegans, this protein is Probable peptidyl-tRNA hydrolase 2.